Consider the following 843-residue polypeptide: N-acetyltransferase ESCO1 (843 aa).

Residues 1–78 (MSIQEKSKEN…SASCSADKTA (78 aa)) form a disordered region. A compositionally biased stretch (acidic residues) spans 18-28 (SEDENLEEEVE). The span at 66-78 (STRSASCSADKTA) shows a compositional bias: polar residues. S202 carries the post-translational modification Phosphoserine. Residues 262–300 (NELRKSAHTQVSTSTKRPQIPLPLVPEHSDDQELEQAGK) are disordered. The span at 269 to 278 (HTQVSTSTKR) shows a compositional bias: polar residues. A Glycyl lysine isopeptide (Lys-Gly) (interchain with G-Cter in SUMO2) cross-link involves residue K335. S415 carries the post-translational modification Phosphoserine. Residues 546 to 584 (DRTFPGSAPNQQHSVLSDEASINRKNRDVPPNHSQLKHD) form a disordered region. Residues 566–584 (SINRKNRDVPPNHSQLKHD) show a composition bias toward basic and acidic residues. The CCHH-type zinc finger occupies 620–644 (VSCNICGMLYTASNPEDETQHLLFH). Acetyl-CoA contacts are provided by residues 775-777 (IWV), 783-788 (RKKIAS), and 815-817 (TPD).

The protein belongs to the acetyltransferase family. ECO subfamily. As to quaternary structure, the subunit structure is controversial. Monomer. Homodimer. In terms of processing, phosphorylated during mitosis.

Its subcellular location is the nucleus. It localises to the chromosome. The enzyme catalyses L-lysyl-[protein] + acetyl-CoA = N(6)-acetyl-L-lysyl-[protein] + CoA + H(+). Its function is as follows. Acetyltransferase required for the establishment of sister chromatid cohesion. Couples the processes of cohesion and DNA replication to ensure that only sister chromatids become paired together. In contrast to the structural cohesins, the deposition and establishment factors are required only during S phase. Acts by mediating the acetylation of cohesin component SMC3. The protein is N-acetyltransferase ESCO1 (Esco1) of Mus musculus (Mouse).